A 429-amino-acid chain; its full sequence is Tol-Pal system protein TolB (429 aa).

The N-terminal stretch at 1 to 21 is a signal peptide; sequence MKPVFKMLLSLLILWTSLLHA.

The protein belongs to the TolB family. As to quaternary structure, the Tol-Pal system is composed of five core proteins: the inner membrane proteins TolA, TolQ and TolR, the periplasmic protein TolB and the outer membrane protein Pal. They form a network linking the inner and outer membranes and the peptidoglycan layer.

It is found in the periplasm. Its function is as follows. Part of the Tol-Pal system, which plays a role in outer membrane invagination during cell division and is important for maintaining outer membrane integrity. TolB occupies a key intermediary position in the Tol-Pal system because it communicates directly with both membrane-embedded components, Pal in the outer membrane and TolA in the inner membrane. The sequence is that of Tol-Pal system protein TolB from Hamiltonella defensa subsp. Acyrthosiphon pisum (strain 5AT).